The chain runs to 366 residues: uncharacterized protein (366 aa).

The OBG-type G domain occupies 63-288 (ARVAMVGFPS…LLEKMWEYLA (226 aa)). Residues 69–76 (GFPSVGKS), 115–119 (DLPGI), and 246–249 (NKVD) contribute to the GTP site. The region spanning 288-365 (ALVRVYTKKP…DHEDVIQIVK (78 aa)) is the TGS domain.

Belongs to the TRAFAC class OBG-HflX-like GTPase superfamily. OBG GTPase family.

This is an uncharacterized protein from Caenorhabditis elegans.